A 255-amino-acid polypeptide reads, in one-letter code: Transmembrane protein 81 (255 aa).

A signal peptide spans 1–30 (MKVLATSFVLGSLGLAFYLPLVVTTPKTLA). Residues 31–226 (IPEKLQEAVG…HPKWKKKVAS (196 aa)) are Extracellular-facing. An N-linked (GlcNAc...) asparagine glycan is attached at asparagine 45. Positions 83–171 (TNWICGMLHF…VQLVKNLRLV (89 aa)) constitute an Ig-like domain. A disulfide bridge connects residues cysteine 104 and cysteine 160. The helical transmembrane segment at 227-247 (ALGIGIAIGVVGGVLVRIVLC) threads the bilayer. Residues 248 to 255 (ALRGGLQQ) lie on the Cytoplasmic side of the membrane.

In terms of assembly, forms a complex with IZUMO1 and SPACA6 on spermatocyte cell membrane required for fertilization. As to expression, highly expressed in sperm (at protein level).

It localises to the cell membrane. In terms of biological role, essential fertilization factor required for male fertility. Part of a conserved trimeric sperm complex with the essential fertilization factors IZUMO1 and SPACA6 which bridges sperm and oocyte membranes during fertilization by binding to IZUMO1R/JUNO on the oocyte. This chain is Transmembrane protein 81, found in Homo sapiens (Human).